A 653-amino-acid polypeptide reads, in one-letter code: Calpain-10 (653 aa).

The 309-residue stretch at L13–I321 folds into the Calpain catalytic domain. Residues C73, H238, and N263 contribute to the active site. 2 domain III regions span residues T322–S494 and E513–Q653.

This sequence belongs to the peptidase C2 family.

Its function is as follows. Calcium-regulated non-lysosomal thiol-protease which catalyzes limited proteolysis of substrates involved in cytoskeletal remodeling and signal transduction. May play a role in insulin-stimulated glucose uptake. The protein is Calpain-10 (CAPN10) of Macaca fascicularis (Crab-eating macaque).